The sequence spans 317 residues: tRNA pseudouridine synthase B (317 aa).

Asp47 serves as the catalytic Nucleophile.

The protein belongs to the pseudouridine synthase TruB family. Type 1 subfamily.

It carries out the reaction uridine(55) in tRNA = pseudouridine(55) in tRNA. Functionally, responsible for synthesis of pseudouridine from uracil-55 in the psi GC loop of transfer RNAs. This is tRNA pseudouridine synthase B from Shewanella woodyi (strain ATCC 51908 / MS32).